The primary structure comprises 154 residues: N-acetylneuraminate anomerase NanQ (154 aa).

Belongs to the NanQ anomerase family. It depends on Zn(2+) as a cofactor.

Its subcellular location is the cytoplasm. The catalysed reaction is N-acetyl-alpha-neuraminate = aceneuramate. The enzyme catalyses N-acetyl-beta-neuraminate = aceneuramate. Inhibited by 1,10-phenanthroline. Functionally, opens both the alpha- and beta-forms of N-acetylneuraminate (sialic acid; Neu5Ac) to provide aceneuramate, the preferred substrate for NanA. Has preferential activity on the beta-anomer rather than the alpha-anomer. Accelerates a reaction that is spontaneous at slightly alkaline pH, facilitates the reaction at acidic pH. In Escherichia coli (strain K12), this protein is N-acetylneuraminate anomerase NanQ.